Here is a 739-residue protein sequence, read N- to C-terminus: MSDACIYCKTAQRCPSDMIQAGPVALIRKLRWLYAPDPVMAGYALRTTCTSLLALGIALWMELGSPQWAALTVWMVAQGTRGRSLAKAKWHLFGMVVGVISGITLVAAIPQAPLMFILLLAVGIGTFCMIGTFMPGPASMTNYRIHGMRASGFTYAIVSLDGIADPHHIFAISMSRATYILLGIVLEASISGLFQLGLTKRTRHQLASTFEDTLKPALTAIAGILVGKEGAMQNVQAIFAQITTLGDQVEFAEVELGRHDHAGDHARAALADIAVLLARALDLATLMRLPLSQDDMFRQEAEAIRDMFLKLPARLEETESMASILADLLTLRRQCRQKVVSDFSTAQPDDAAREAVLRHGMLQQALVELIDALRMALTQFEASRHPGSHDHFHSPIRSYRDWQQAITNSLRSSVTVFGAGLIWICTAWPSGLTFIMFVCIVCSLFSTLERPALATQAFLRGACCAVVAAGILNLALMGKSTTFEMLGMWSGLAMMIGGLAFAYPPLTLPAVSYNLFLPILIGPSNQAKTDEIVYFNTALPLVLGLLYASWMYRVFLPYDPAHQRWTMREHILRDLHRIADGRAQETVDSVVSRNVDRFVRLMTNSGSTPSPVIQAYLTGILSGMRVMLNLLRLQAIRRDTRLNPEAGQALALIMGRMSHFSGRYHGHYGRTLRATKLAILRLRTCERNEDRPRERFVLIAALTSLDVIATELDTNRIFFDARSPYLDPSLTPAELESTG.

8 helical membrane passes run 53-73 (LALGIALWMELGSPQWAALTV), 90-110 (WHLFGMVVGVISGITLVAAIP), 114-134 (LMFILLLAVGIGTFCMIGTFM), 178-198 (TYILLGIVLEASISGLFQLGL), 421-441 (LIWICTAWPSGLTFIMFVCIV), 457-477 (AFLRGACCAVVAAGILNLALM), 491-511 (GLAMMIGGLAFAYPPLTLPAV), and 532-552 (IVYFNTALPLVLGLLYASWMY).

This sequence belongs to the aromatic acid exporter ArAE (TC 2.A.85) family.

The protein resides in the cell membrane. This is an uncharacterized protein from Gluconobacter oxydans (strain 621H) (Gluconobacter suboxydans).